The following is a 579-amino-acid chain: F-box protein At5g39450 (579 aa).

Residues 16–62 (TCLLLSLPEDVIAVIARFVSPRDICNLSLCCKSLCDVVDSERIWLVQ) form the F-box domain.

In Arabidopsis thaliana (Mouse-ear cress), this protein is F-box protein At5g39450.